Consider the following 208-residue polypeptide: Probable GTP-binding protein EngB (208 aa).

Positions 23–205 constitute an EngB-type G domain; it reads LTSEMVVLGR…RQTLLKYLLT (183 aa). GTP-binding positions include 31–38, 57–61, 84–87, 154–157, and 182–184; these read GRSNVGKS, GKTRL, DLPG, TKFD, and FNA. Serine 38 and threonine 59 together coordinate Mg(2+).

The protein belongs to the TRAFAC class TrmE-Era-EngA-EngB-Septin-like GTPase superfamily. EngB GTPase family. The cofactor is Mg(2+).

Functionally, necessary for normal cell division and for the maintenance of normal septation. This Helicobacter acinonychis (strain Sheeba) protein is Probable GTP-binding protein EngB.